The primary structure comprises 306 residues: Acetyl-coenzyme A carboxylase carboxyl transferase subunit beta (306 aa).

Residues 28–297 (LWIKCPDTGQ…TPAGKPSTPV (270 aa)) form the CoA carboxyltransferase N-terminal domain. Residues 287–306 (QTPAGKPSTPVAPEPVPDAA) form a disordered region. Over residues 296–306 (PVAPEPVPDAA) the composition is skewed to pro residues.

Belongs to the AccD/PCCB family. In terms of assembly, acetyl-CoA carboxylase is a heterohexamer composed of biotin carboxyl carrier protein (AccB), biotin carboxylase (AccC) and two subunits each of ACCase subunit alpha (AccA) and ACCase subunit beta (AccD).

The protein localises to the cytoplasm. It carries out the reaction N(6)-carboxybiotinyl-L-lysyl-[protein] + acetyl-CoA = N(6)-biotinyl-L-lysyl-[protein] + malonyl-CoA. Its pathway is lipid metabolism; malonyl-CoA biosynthesis; malonyl-CoA from acetyl-CoA: step 1/1. Functionally, component of the acetyl coenzyme A carboxylase (ACC) complex. Biotin carboxylase (BC) catalyzes the carboxylation of biotin on its carrier protein (BCCP) and then the CO(2) group is transferred by the transcarboxylase to acetyl-CoA to form malonyl-CoA. This chain is Acetyl-coenzyme A carboxylase carboxyl transferase subunit beta, found in Methylorubrum populi (strain ATCC BAA-705 / NCIMB 13946 / BJ001) (Methylobacterium populi).